Here is a 222-residue protein sequence, read N- to C-terminus: 2-C-methyl-D-erythritol 4-phosphate cytidylyltransferase (222 aa).

It belongs to the IspD/TarI cytidylyltransferase family. IspD subfamily.

The catalysed reaction is 2-C-methyl-D-erythritol 4-phosphate + CTP + H(+) = 4-CDP-2-C-methyl-D-erythritol + diphosphate. It participates in isoprenoid biosynthesis; isopentenyl diphosphate biosynthesis via DXP pathway; isopentenyl diphosphate from 1-deoxy-D-xylulose 5-phosphate: step 2/6. Catalyzes the formation of 4-diphosphocytidyl-2-C-methyl-D-erythritol from CTP and 2-C-methyl-D-erythritol 4-phosphate (MEP). This Thermotoga maritima (strain ATCC 43589 / DSM 3109 / JCM 10099 / NBRC 100826 / MSB8) protein is 2-C-methyl-D-erythritol 4-phosphate cytidylyltransferase.